Reading from the N-terminus, the 421-residue chain is Enolase 1 (421 aa).

A (2R)-2-phosphoglycerate-binding site is contributed by Gln164. The Proton donor role is filled by Glu206. Mg(2+)-binding residues include Asp243, Glu287, and Asp314. (2R)-2-phosphoglycerate is bound by residues Lys339, Arg368, Ser369, and Lys390. Residue Lys339 is the Proton acceptor of the active site.

Belongs to the enolase family. As to quaternary structure, component of the RNA degradosome, a multiprotein complex involved in RNA processing and mRNA degradation. Requires Mg(2+) as cofactor.

The protein resides in the cytoplasm. It is found in the secreted. Its subcellular location is the cell surface. It catalyses the reaction (2R)-2-phosphoglycerate = phosphoenolpyruvate + H2O. Its pathway is carbohydrate degradation; glycolysis; pyruvate from D-glyceraldehyde 3-phosphate: step 4/5. In terms of biological role, catalyzes the reversible conversion of 2-phosphoglycerate (2-PG) into phosphoenolpyruvate (PEP). It is essential for the degradation of carbohydrates via glycolysis. The protein is Enolase 1 of Methylococcus capsulatus (strain ATCC 33009 / NCIMB 11132 / Bath).